Here is a 456-residue protein sequence, read N- to C-terminus: Serine--tRNA ligase (456 aa).

Positions 49–69 are disordered; it reads HERNEVSSTIGELKQAGEEEA. 241-243 is a binding site for L-serine; it reads TAE. Residues 272 to 274 and Val288 each bind ATP; that span reads RQE. Glu295 is an L-serine binding site. 368–371 provides a ligand contact to ATP; the sequence is EVSS. Ser404 is a binding site for L-serine.

This sequence belongs to the class-II aminoacyl-tRNA synthetase family. Type-1 seryl-tRNA synthetase subfamily. Homodimer. The tRNA molecule binds across the dimer.

The protein localises to the cytoplasm. The catalysed reaction is tRNA(Ser) + L-serine + ATP = L-seryl-tRNA(Ser) + AMP + diphosphate + H(+). The enzyme catalyses tRNA(Sec) + L-serine + ATP = L-seryl-tRNA(Sec) + AMP + diphosphate + H(+). Its pathway is aminoacyl-tRNA biosynthesis; selenocysteinyl-tRNA(Sec) biosynthesis; L-seryl-tRNA(Sec) from L-serine and tRNA(Sec): step 1/1. Functionally, catalyzes the attachment of serine to tRNA(Ser). Is also able to aminoacylate tRNA(Sec) with serine, to form the misacylated tRNA L-seryl-tRNA(Sec), which will be further converted into selenocysteinyl-tRNA(Sec). The protein is Serine--tRNA ligase of Halorubrum lacusprofundi (strain ATCC 49239 / DSM 5036 / JCM 8891 / ACAM 34).